A 148-amino-acid chain; its full sequence is Ubiquitin-conjugating enzyme E2 29 (148 aa).

The UBC core domain occupies 1–147 (MATRRILKEL…ARSWTQKYAL (147 aa)). Cysteine 85 functions as the Glycyl thioester intermediate in the catalytic mechanism.

This sequence belongs to the ubiquitin-conjugating enzyme family.

It carries out the reaction S-ubiquitinyl-[E1 ubiquitin-activating enzyme]-L-cysteine + [E2 ubiquitin-conjugating enzyme]-L-cysteine = [E1 ubiquitin-activating enzyme]-L-cysteine + S-ubiquitinyl-[E2 ubiquitin-conjugating enzyme]-L-cysteine.. It participates in protein modification; protein ubiquitination. Its function is as follows. Accepts the ubiquitin from the E1 complex and catalyzes its covalent attachment to other proteins. The protein is Ubiquitin-conjugating enzyme E2 29 (UBC29) of Arabidopsis thaliana (Mouse-ear cress).